Reading from the N-terminus, the 162-residue chain is Transcriptional repressor NrdR (162 aa).

Residues 3–34 (CPFCQFEGLKVTDSRDAMEMNAIRRRRECLNC) fold into a zinc finger. The ATP-cone domain maps to 48-138 (VQVQKRDGTY…VYKRFKDLGE (91 aa)).

It belongs to the NrdR family. Requires Zn(2+) as cofactor.

In terms of biological role, negatively regulates transcription of bacterial ribonucleotide reductase nrd genes and operons by binding to NrdR-boxes. This Protochlamydia amoebophila (strain UWE25) protein is Transcriptional repressor NrdR.